Reading from the N-terminus, the 244-residue chain is Mediator of RNA polymerase II transcription subunit 8 (244 aa).

Residues 6-30 (QEQLKTLEQSRQRLVQLTRSLASLI) are a coiled coil.

This sequence belongs to the Mediator complex subunit 8 family. As to quaternary structure, component of the Mediator complex.

It is found in the nucleus. In terms of biological role, component of the Mediator complex, a coactivator involved in the regulated transcription of nearly all RNA polymerase II-dependent genes. Mediator functions as a bridge to convey information from gene-specific regulatory proteins to the basal RNA polymerase II transcription machinery. Mediator is recruited to promoters by direct interactions with regulatory proteins and serves as a scaffold for the assembly of a functional preinitiation complex with RNA polymerase II and the general transcription factors. The polypeptide is Mediator of RNA polymerase II transcription subunit 8 (med8) (Aspergillus oryzae (strain ATCC 42149 / RIB 40) (Yellow koji mold)).